The following is a 620-amino-acid chain: Pentatricopeptide repeat-containing protein At5g66520 (620 aa).

PPR repeat units lie at residues 79–113, 114–148, 149–179, 180–210, 211–245, 246–280, 281–311, 312–346, 347–382, and 383–413; these read DTFLWNLMIRGFSCSDEPERSLLLYQRMLCSSAPH, NAYTFPSLLKACSNLSAFEETTQIHAQITKLGYEN, DVYAVNSLINSYAVTGNFKLAHLLFDRIPEP, DDVSWNSVIKGYVKAGKMDIALTLFRKMAEK, NAISWTTMISGYVQADMNKEALQLFHEMQNSDVEP, DNVSLANALSACAQLGALEQGKWIHSYLNKTRIRM, DSVLGCVLIDMYAKCGEMEEALEVFKNIKKK, SVQAWTALISGYAYHGHGREAISKFMEMQKMGIKP, NVITFTAVLTACSYTGLVEEGKLIFYSMERDYNLKP, and TIEHYGCIVDLLGRAGLLDEAKRFIQEMPLK. The type E motif stretch occupies residues 418–493; that stretch reads IWGALLKACR…VPGCSTISLE (76 aa). The segment at 494–524 is type E(+) motif; sequence GTTHEFLAGDRSHPEIEKIQSKWRIMRRKLE. The tract at residues 525-620 is type DYW motif; sequence ENGYVPELEE…DGKCSCGDYW (96 aa).

This sequence belongs to the PPR family. PCMP-H subfamily.

The polypeptide is Pentatricopeptide repeat-containing protein At5g66520 (PCMP-H61) (Arabidopsis thaliana (Mouse-ear cress)).